Here is a 215-residue protein sequence, read N- to C-terminus: Cytochrome b6 (215 aa).

A helical transmembrane segment spans residues 32 to 52 (IFYCLGGITLTCFLVQVATGF). C35 lines the heme c pocket. Heme b is bound by residues H86 and H100. A run of 3 helical transmembrane segments spans residues 90–110 (ASMM…TGGF), 116–136 (LTWI…VTGY), and 186–206 (LHTF…FLMI). Heme b is bound by residues H187 and H202.

The protein belongs to the cytochrome b family. PetB subfamily. The 4 large subunits of the cytochrome b6-f complex are cytochrome b6, subunit IV (17 kDa polypeptide, PetD), cytochrome f and the Rieske protein, while the 4 small subunits are PetG, PetL, PetM and PetN. The complex functions as a dimer. The cofactor is heme b. Heme c is required as a cofactor.

The protein localises to the plastid. It is found in the chloroplast thylakoid membrane. In terms of biological role, component of the cytochrome b6-f complex, which mediates electron transfer between photosystem II (PSII) and photosystem I (PSI), cyclic electron flow around PSI, and state transitions. The polypeptide is Cytochrome b6 (Psilotum nudum (Whisk fern)).